The sequence spans 447 residues: UDP-N-acetylmuramate--L-alanine ligase (447 aa).

108-114 (GSHGKTS) serves as a coordination point for ATP.

The protein belongs to the MurCDEF family.

The protein resides in the cytoplasm. It catalyses the reaction UDP-N-acetyl-alpha-D-muramate + L-alanine + ATP = UDP-N-acetyl-alpha-D-muramoyl-L-alanine + ADP + phosphate + H(+). The protein operates within cell wall biogenesis; peptidoglycan biosynthesis. Its function is as follows. Cell wall formation. The protein is UDP-N-acetylmuramate--L-alanine ligase of Listeria monocytogenes serotype 4b (strain F2365).